The following is a 373-amino-acid chain: Phosphoserine aminotransferase (373 aa).

An L-glutamate-binding site is contributed by R46. Pyridoxal 5'-phosphate is bound by residues F104, T150, D172, and Q195. K196 carries the N6-(pyridoxal phosphate)lysine modification. Residue 247–248 coordinates pyridoxal 5'-phosphate; it reads NT.

The protein belongs to the class-V pyridoxal-phosphate-dependent aminotransferase family. SerC subfamily. In terms of assembly, homodimer. Pyridoxal 5'-phosphate is required as a cofactor.

The protein localises to the cytoplasm. It catalyses the reaction O-phospho-L-serine + 2-oxoglutarate = 3-phosphooxypyruvate + L-glutamate. The enzyme catalyses 4-(phosphooxy)-L-threonine + 2-oxoglutarate = (R)-3-hydroxy-2-oxo-4-phosphooxybutanoate + L-glutamate. The protein operates within amino-acid biosynthesis; L-serine biosynthesis; L-serine from 3-phospho-D-glycerate: step 2/3. Its pathway is cofactor biosynthesis; pyridoxine 5'-phosphate biosynthesis; pyridoxine 5'-phosphate from D-erythrose 4-phosphate: step 3/5. Catalyzes the reversible conversion of 3-phosphohydroxypyruvate to phosphoserine and of 3-hydroxy-2-oxo-4-phosphonooxybutanoate to phosphohydroxythreonine. The sequence is that of Phosphoserine aminotransferase from Rhodococcus jostii (strain RHA1).